The following is a 2648-amino-acid chain: E3 ubiquitin-protein ligase hecd-1 (2648 aa).

2 ANK repeats span residues 374–403 (VGQS…DVNK) and 405–434 (HKSS…NPDL). Basic and acidic residues predominate over residues 433-455 (DLRDEDGKTALDKARERSDDDHN). 3 disordered regions span residues 433–494 (DLRD…ELPN), 645–714 (PMEI…KATA), and 1376–1400 (DPPK…ALPP). Polar residues-rich tracts occupy residues 478–489 (ASTSKQPGTSTK), 652–661 (NQPSSSTAVP), and 670–688 (TVPS…NPST). Low complexity-rich tracts occupy residues 696 to 714 (SSTP…KATA) and 1383 to 1400 (PAGT…ALPP). The region spanning 1438-1510 (RSRGSYKISE…NFDIERVTST (73 aa)) is the MIB/HERC2 domain. 4 disordered regions span residues 1538–1562 (YTPK…GSSR), 1575–1629 (KNTT…SLQH), 1652–1796 (NQEP…LLGG), and 1811–1836 (ESLS…GKKP). 2 stretches are compositionally biased toward low complexity: residues 1543-1562 (TGGP…GSSR) and 1575-1586 (KNTTPAGTPSSG). A compositionally biased stretch (polar residues) spans 1610–1629 (TSGPSVASTGQAASAESLQH). A compositionally biased stretch (acidic residues) spans 1653–1666 (QEPEDEPMGGEESD). The segment covering 1667-1696 (SAASMRSAASSNSQMSMGSSSQQQQQQDSD) has biased composition (low complexity). Composition is skewed to acidic residues over residues 1736–1746 (TDGDADADETN) and 1756–1783 (DAME…DESS). The segment covering 1812 to 1823 (SLSDASSSAKDA) has biased composition (low complexity). Positions 2240–2648 (FHADRKAVLE…AINEKGFHLN (409 aa)) constitute an HECT domain. Cys-2617 serves as the catalytic Glycyl thioester intermediate.

The protein belongs to the UPL family. K-HECT subfamily. As to expression, expressed in most tissues, including hypodermis, muscle, intestine, vulva, and neurons.

The catalysed reaction is S-ubiquitinyl-[E2 ubiquitin-conjugating enzyme]-L-cysteine + [acceptor protein]-L-lysine = [E2 ubiquitin-conjugating enzyme]-L-cysteine + N(6)-ubiquitinyl-[acceptor protein]-L-lysine.. The protein operates within protein modification; protein ubiquitination. Functionally, E3 ubiquitin-protein ligase which accepts ubiquitin from an E2 ubiquitin-conjugating enzyme in the form of a thioester and then directly transfers the ubiquitin to targeted substrates. Involved in the ubiquitination and proteasomal-mediated degradation of cytoplasmic and mitochondrial proteins. Positively regulates lin-12 activity in the anchor cell (AC)/vulval precursor (VU) cell fate decision. Negatively regulates glp-1 activity in germline proliferation. May play a role in the formation of fibrous organelles, a hemidesmosome-like structure attaching muscles to the epidermis. Regulates germline DNA double-strand-break repair and apoptosis in response to DNA damage by recruiting E4 ubiquitin-protein ligase ufd-2 to DNA repair foci. The chain is E3 ubiquitin-protein ligase hecd-1 from Caenorhabditis elegans.